The following is a 500-amino-acid chain: Probable cation transporter HKT1;4 (500 aa).

Residues 1-12 are Cytoplasmic-facing; it reads MPTSRRALAGGA. Transmembrane regions (helical) follow at residues 13–33 and 74–94; these read LSMH…LLGV and LVVL…LVGL. Residues 95–156 are Cytoplasmic-facing; that stretch reads ASKWSKLRSD…ADTLRHNAVR (62 aa). The interval 121 to 145 is disordered; that stretch reads ADIDGGDVENPTSSGEEAASRRRPM. The next 2 membrane-spanning stretches (helical) occupy residues 157–177 and 239–259; these read ALFY…AVAV and VLAG…AAAA. Topologically, residues 260–290 are cytoplasmic; it reads ATRREELVEMAREGGRAAAAGYAHLMPARRC. 2 helical membrane passes run 291–311 and 346–366; these read WMLA…VCGM and LSIL…LPPY. Residues 367-390 are Cytoplasmic-facing; the sequence is TTWFPFEENSTTKDSNAENQGIRL. 2 consecutive transmembrane segments (helical) span residues 391 to 411 and 464 to 484; these read LEST…AICI and GFVG…MFFG. Topologically, residues 485-500 are cytoplasmic; that stretch reads RLKKFSMKGGKAWKLS.

It belongs to the TrkH potassium transport family. HKT (TC 2.A.38.3) subfamily.

Its subcellular location is the membrane. Probable cation transporter. May be involved in regulation of potassium-sodium homeostasis. The sequence is that of Probable cation transporter HKT1;4 from Oryza sativa subsp. japonica (Rice).